A 230-amino-acid chain; its full sequence is N-(5'-phosphoribosyl)anthranilate isomerase (230 aa).

The protein belongs to the TrpF family.

The enzyme catalyses N-(5-phospho-beta-D-ribosyl)anthranilate = 1-(2-carboxyphenylamino)-1-deoxy-D-ribulose 5-phosphate. It participates in amino-acid biosynthesis; L-tryptophan biosynthesis; L-tryptophan from chorismate: step 3/5. This Ralstonia nicotianae (strain ATCC BAA-1114 / GMI1000) (Ralstonia solanacearum) protein is N-(5'-phosphoribosyl)anthranilate isomerase.